A 115-amino-acid chain; its full sequence is Transmembrane protein 218 (115 aa).

3 helical membrane-spanning segments follow: residues 5-25, 38-58, and 81-101; these read VLGV…VLLL, FSVI…LLFP, and YVLL…VLIH.

The protein belongs to the TMEM218 family. Interacts with TMEM67.

It is found in the membrane. It localises to the cell projection. Its subcellular location is the cilium. May be involved in ciliary biogenesis or function. The polypeptide is Transmembrane protein 218 (TMEM218) (Homo sapiens (Human)).